Reading from the N-terminus, the 235-residue chain is tRNA (guanine-N(1)-)-methyltransferase (235 aa).

S-adenosyl-L-methionine-binding positions include G113 and I133 to L138.

This sequence belongs to the RNA methyltransferase TrmD family. As to quaternary structure, homodimer.

It is found in the cytoplasm. It catalyses the reaction guanosine(37) in tRNA + S-adenosyl-L-methionine = N(1)-methylguanosine(37) in tRNA + S-adenosyl-L-homocysteine + H(+). Functionally, specifically methylates guanosine-37 in various tRNAs. The sequence is that of tRNA (guanine-N(1)-)-methyltransferase from Wolbachia sp. subsp. Brugia malayi (strain TRS).